The sequence spans 112 residues: U15-hexatoxin-Hi1a (112 aa).

An N-terminal signal peptide occupies residues 1-18 (MNTLIAFAVLLLLSTTLG). Residues 19 to 73 (DTDDKVSHEEIQERKELSGISEELLLQQLEAVEAALMEKERLEEMEEDGNSREKR) constitute a propeptide that is removed on maturation. 3 disulfides stabilise this stretch: Cys74–Cys88, Cys81–Cys93, and Cys87–Cys107.

Belongs to the neurotoxin 14 (magi-1) family. 08 (Ltx-4) subfamily. In terms of tissue distribution, expressed by the venom gland.

It is found in the secreted. Probable ion channel inhibitor. This is U15-hexatoxin-Hi1a from Hadronyche infensa (Fraser island funnel-web spider).